The primary structure comprises 171 residues: Allophycocyanin subunit beta-18 (171 aa).

Asparagine 72 is subject to N4-methylasparagine. Cysteine 82 serves as a coordination point for (2R,3E)-phycocyanobilin.

It belongs to the phycobiliprotein family. In terms of assembly, heterodimer of an alpha and a beta chain. Contains one covalently linked bilin chromophore.

It is found in the plastid. Its subcellular location is the chloroplast thylakoid membrane. In terms of biological role, light-harvesting photosynthetic bile pigment-protein from the phycobiliprotein complex. Allophycocyanin has a maximum absorption at approximately 650 nanometers. The polypeptide is Allophycocyanin subunit beta-18 (apcF) (Aglaothamnion neglectum (Red alga)).